Consider the following 356-residue polypeptide: Cyclin-D1-binding protein 1 (356 aa).

Ala-2 is subject to N-acetylalanine. 2 interaction with TCF3 regions span residues 2–181 (ASST…VDFV) and 147–356 (ISCN…AAEL). Positions 2–187 (ASSTAAVPFL…VDFVKDAHEE (186 aa)) are interaction with RPLP0. Residues 2-205 (ASSTAAVPFL…DPYSGLLNDS (204 aa)) form a required for interaction with CCND1 region. Residues 198–224 (YSGLLNDSEDNSDSHSDEDGVLGLPSN) are disordered. Positions 236 to 356 (LIIPCLALVR…KALTQRAAEL (121 aa)) are interaction with RPLP0.

It belongs to the CCNDBP1 family. In terms of assembly, interacts with CCND1 and GRAP2. May also interact with COPS5, RPLP0, SIRT6, SYF2 and TCF3. Post-translationally, phosphorylated. As to expression, expressed at high levels in brain, intestine, muscle and ovary and at lower levels in heart, kidney, liver, lung, spleen and testis.

It is found in the cytoplasm. The protein resides in the nucleus. In terms of biological role, may negatively regulate cell cycle progression. May act at least in part via inhibition of the cyclin-D1/CDK4 complex, thereby preventing phosphorylation of RB1 and blocking E2F-dependent transcription. May be required for hepatocyte proliferation. In Mus musculus (Mouse), this protein is Cyclin-D1-binding protein 1 (Ccndbp1).